Reading from the N-terminus, the 207-residue chain is Ribosomal RNA small subunit methyltransferase G (207 aa).

S-adenosyl-L-methionine-binding positions include G75, M80, 126–127, and R141; that span reads VE.

The protein belongs to the methyltransferase superfamily. RNA methyltransferase RsmG family.

The protein resides in the cytoplasm. The catalysed reaction is guanosine(527) in 16S rRNA + S-adenosyl-L-methionine = N(7)-methylguanosine(527) in 16S rRNA + S-adenosyl-L-homocysteine. Functionally, specifically methylates the N7 position of guanine in position 527 of 16S rRNA. The polypeptide is Ribosomal RNA small subunit methyltransferase G (Laribacter hongkongensis (strain HLHK9)).